The following is a 1673-amino-acid chain: Calmodulin-binding transcription activator 1 (1673 aa).

Positions 63–188 (KCSSLPKERH…YLNVPAIEDC (126 aa)) form a DNA-binding region, CG-1. A Nuclear localization signal motif is present at residues 112-119 (RKKVKYRK). The interval 283–375 (HRIISPKVEP…LNSDPDMVDS (93 aa)) is disordered. Residues 302-313 (EVQHNDVSEGKH) show a composition bias toward basic and acidic residues. Positions 337–367 (HQSSTEVSSTNQVEVPDTTQSSPVSISSGLN) are enriched in polar residues. The IPT/TIG domain maps to 875–953 (DYSPEWSYPE…ISNSVVFEYK (79 aa)). Positions 990 to 1021 (MAEMTGSQQHKQASGGGSSGGGSGSGNGGSQA) are disordered. The span at 1003–1018 (SGGGSSGGGSGSGNGG) shows a compositional bias: gly residues. 3 ANK repeats span residues 1064–1093 (RGMT…KHAD), 1109–1129 (FSCT…AVVL), and 1143–1172 (LGRL…DEQA). Disordered regions lie at residues 1215–1246 (ASTN…PKKH) and 1264–1317 (ALSL…GSQP). The span at 1273–1289 (RKQSPSSKQSVPETLSP) shows a compositional bias: polar residues. IQ domains lie at 1547–1576 (QEVA…AAIL), 1577–1599 (IQSK…AAVL), and 1600–1622 (IQKY…TAVI).

Belongs to the CAMTA family. As to quaternary structure, may interact with calmodulin. In terms of tissue distribution, normally expressed in non-neoplastic adult central nervous system tissues: detected in whole brain, cerebellum, brain cortex, occipital lobe, frontal lobe, temporal lobe, putamen. Expression levels are low in oligodendroglial tumors, and are reduced by half in oligodendroglioma and astrocytoma cases with 1p loss of heterozygosity. Detected in neuroblastic-type cultured neuroblastoma cells. Expressed in heart and kidney.

The protein resides in the nucleus. Its subcellular location is the cytoplasm. Its function is as follows. Transcriptional activator. The sequence is that of Calmodulin-binding transcription activator 1 from Homo sapiens (Human).